We begin with the raw amino-acid sequence, 634 residues long: Growth hormone receptor (634 aa).

A signal peptide spans 1 to 18 (MDLWQLLLTLAVAGSSDA). Topologically, residues 19-260 (FSGSEATPAF…NPSACEEDFQ (242 aa)) are extracellular. Asn46 carries an N-linked (GlcNAc...) asparagine glycan. Cys56 and Cys66 are oxidised to a cystine. Asn73 carries an N-linked (GlcNAc...) asparagine glycan. The cysteines at positions 97 and 108 are disulfide-linked. Asn111 carries an N-linked (GlcNAc...) asparagine glycan. Cys122 and Cys136 are joined by a disulfide. The 104-residue stretch at 147–250 (PPVGLNWTLL…EVLLITFPQM (104 aa)) folds into the Fibronectin type-III domain. 3 N-linked (GlcNAc...) asparagine glycosylation sites follow: Asn152, Asn157, and Asn196. A WSXWS motif motif is present at residues 236-240 (YGKFS). Residues 261 to 284 (FPWFLIIMFGILGLAVTLFLLIFS) form a helical membrane-spanning segment. Residues 285-634 (KQQRIKMLIL…STDQLNKIMP (350 aa)) are Cytoplasmic-facing. Residues 290-375 (KMLILPPVPV…HEKSLNIFGA (86 aa)) form a required for JAK2 binding region. Positions 293–301 (ILPPVPVPK) match the Box 1 motif motif. Residues 336 to 345 (DSWVEFIELD) carry the UbE motif motif. Ser337 carries the phosphoserine modification. Phosphotyrosine occurs at positions 483 and 591.

It belongs to the type I cytokine receptor family. Type 1 subfamily. In terms of assembly, on growth hormone (GH) binding, forms homodimers and binds JAK2 via a box 1-containing domain. Post-translationally, the soluble form (GHBP) is produced by phorbol ester-promoted proteolytic cleavage at the cell surface (shedding) by ADAM17/TACE. Shedding is inhibited by growth hormone (GH) binding to the receptor probably due to a conformational change in GHR rendering the receptor inaccessible to ADAM17. In terms of processing, on GH binding, phosphorylated on tyrosine residues in the cytoplasmic domain by JAK2. Ubiquitinated by the ECS(SOCS2) complex following ligand-binding and phosphorylation by JAK2, leading to its degradation by the proteasome. Regulation by the ECS(SOCS2) complex acts as a negative feedback loop of growth hormone receptor signaling. Ubiquitination is not sufficient for GHR internalization.

The protein localises to the cell membrane. Its subcellular location is the secreted. Receptor for pituitary gland growth hormone (GH1) involved in regulating postnatal body growth. On ligand binding, couples to the JAK2/STAT5 pathway. Its function is as follows. The soluble form (GHBP) acts as a reservoir of growth hormone in plasma and may be a modulator/inhibitor of GH signaling. The sequence is that of Growth hormone receptor (GHR) from Bos indicus (Zebu).